Consider the following 5488-residue polypeptide: Polyketide synthase PksN (5488 aa).

The tract at residues 3–301 is condensation; that stretch reads RQLKSPLSEG…NMMAVRSKNI (299 aa). The WD 1 repeat unit spans residues 165-205; it reads QQPSTADYYDFVDWENRMLTGREGEEHLAYWKEQLSGSLPV. An adenylation region spans residues 493 to 903; it reads TYKEVDEKST…EFPGILDQAV (411 aa). The WD 2 repeat unit spans residues 965–1006; sequence RKELEKREIVFNRRKPNHLQLTEIEDQVLRIWEETLKVSGFG. In terms of domain architecture, Carrier 1 spans 983 to 1058; that stretch reads LQLTEIEDQV…AISEYILEMK (76 aa). Ser1018 bears the O-(pantetheine 4'-phosphoryl)serine mark. The 427-residue stretch at 1089–1515 folds into the Ketosynthase family 3 (KS3) 1 domain; it reads DDSVAIVGIS…GTNAHAIFEQ (427 aa). Active-site for beta-ketoacyl synthase 1 activity residues include Cys1261, His1397, and His1437. The tract at residues 1700-1826 is N-terminal hotdog fold 1; that stretch reads HPLVHHNTSV…GKAELIQLKR (127 aa). Positions 1700 to 1992 constitute a PKS/mFAS DH 1 domain; that stretch reads HPLVHHNTSV…TRVMEADIQT (293 aa). The active-site Proton acceptor; for dehydratase activity 1 is the His1729. Residues 1840 to 1992 form a C-terminal hotdog fold 1 region; that stretch reads DQSKMDAASF…TRVMEADIQT (153 aa). The active-site Proton donor; for dehydratase activity 1 is Asp1900. Residues 2165–2204 form a WD 3 repeat; sequence KQAKGDGSKPWKDNGVYLISGGAGGLGHIFAKEIAEQTKN. The Carrier 2 domain occupies 2448–2525; it reads SLLDKVKAML…AFGKHLSEEY (78 aa). O-(pantetheine 4'-phosphoryl)serine is present on Ser2485. Residues 2576 to 3012 form the Ketosynthase family 3 (KS3) 2 domain; the sequence is PEPIAIVGIS…GVNAHVIIEE (437 aa). Catalysis depends on for beta-ketoacyl synthase 2 activity residues Cys2747, His2882, and His2928. Residues 3038 to 3109 adopt a coiled-coil conformation; it reads KNEARLKEHA…AAEKSGVEDV (72 aa). An N-terminal hotdog fold 2 region spans residues 3207 to 3332; the sequence is HPLMHQNTSN…GSAVLNPAEN (126 aa). A PKS/mFAS DH 2 domain is found at 3207–3492; that stretch reads HPLMHQNTSN…FRAAEGGSGS (286 aa). Catalysis depends on His3236, which acts as the Proton acceptor; for dehydratase activity 2. The tract at residues 3346–3492 is C-terminal hotdog fold 2; sequence QESHFSVNEV…FRAAEGGSGS (147 aa). Asp3408 acts as the Proton donor; for dehydratase activity 2 in catalysis. Residues 3626-3655 are a coiled coil; it reads DSHENVESVIEKLKENKRHTEDQHIKYEKG. A WD 4 repeat occupies 3666 to 3705; it reads QIDDREISMPWRDKGVYLITGGAGGLGFIFAKEIARQAEQ. The Carrier 3 domain maps to 3952 to 4026; that stretch reads DHIQEVLKQT…AFAGYLSEEY (75 aa). An O-(pantetheine 4'-phosphoryl)serine modification is found at Ser3986. The Ketosynthase family 3 (KS3) 3 domain occupies 4076–4511; it reads PEPIAIVGMS…GVNAHVVIEE (436 aa). Catalysis depends on for beta-ketoacyl synthase 3 activity residues Cys4245, His4380, and His4427. Residues 4706-4830 are N-terminal hotdog fold 3; it reads HPLIHVNTSD…GSASIRGAGD (125 aa). A PKS/mFAS DH 3 domain is found at 4706-4988; that stretch reads HPLIHVNTSD…SRLLEEGIQP (283 aa). The Proton acceptor; for dehydratase activity 3 role is filled by His4735. Residues 4844-4988 are C-terminal hotdog fold 3; sequence SLSTLSHDQC…SRLLEEGIQP (145 aa). The active-site Proton donor; for dehydratase activity 3 is Asp4906. The WD 5 repeat unit spans residues 5206 to 5244; it reads HNNQPVHTKYKHGGVYVVIGGAGGIGEAWSEYMIRTYQA. Residues 5275-5303 are a coiled coil; the sequence is IQADAANREELERAYETMKQTHREINGII.

It belongs to the ATP-dependent AMP-binding enzyme family. Requires pantetheine 4'-phosphate as cofactor.

The protein localises to the cytoplasm. Its pathway is antibiotic biosynthesis; bacillaene biosynthesis. Its function is as follows. Involved in some intermediate steps for the synthesis of the antibiotic polyketide bacillaene which is involved in secondary metabolism. In Bacillus subtilis (strain 168), this protein is Polyketide synthase PksN (pksN).